The primary structure comprises 101 residues: Iron-sulfur cluster assembly protein CyaY (101 aa).

It belongs to the frataxin family.

Involved in iron-sulfur (Fe-S) cluster assembly. May act as a regulator of Fe-S biogenesis. This is Iron-sulfur cluster assembly protein CyaY from Actinobacillus pleuropneumoniae serotype 5b (strain L20).